A 73-amino-acid polypeptide reads, in one-letter code: Antimicrobial peptide 6 (73 aa).

The first 22 residues, 1–22 (MQIKHLITLFFLVLIVADQCSA), serve as a signal peptide directing secretion. The propeptide occupies 45–73 (EISTQIDQYRNLQKREAELEELLDRLPMY).

The protein belongs to the non-disulfide-bridged peptide (NDBP) superfamily. Short antimicrobial peptide (group 4) family. As to expression, expressed by the venom gland.

The protein resides in the secreted. Functionally, antibacterial peptide. This chain is Antimicrobial peptide 6, found in Tityus costatus (Brazilian scorpion).